The sequence spans 580 residues: MGEKAVPLLRRRRVKRSCPSCGSELGVEEKRGKGNPISIQLFPPELVEHIISFLPVRDLVALGQTCRYFHEVCDGEGVWRRICRRLSPRLQDQGSGVRPWKRAAILNYTKGLYFQAFGGRRRCLSKSVAPLLAHGYRRFLPTKDHVFILDYVGTLFFLKNALVSTLGQMQWKRACRYVVLCRGAKDFASDPRCDTVYRKYLYVLATREPQEVVGTTSSRACDCVEVYLQSSGQRVFKMTFHHSMTFKQIVLVGQETQRALLLLTEEGKIYSLVVNETQLDQPRSYTVQLALRKVSHYLPHLRVACMTSNQSSTLYVTDQGGVYFEVHTPGVYRDLFGTLQAFDPLDQQMPLALSLPAKILFCALGYNHLGLVDEFGRIFMQGNNRYGQLGTGDKMDRGEPTQVCYLQRPITLWCGLNHSLVLSQSSEFSKELLGCGCGAGGRLPGWPKGSASFVKLQVKVPLCACALCATRECLYILSSHDIEQHAPYRHLPASRVVGTPEPSLGARAPQDPGGMAQACEEYLSQIHSCQTLQDRTEKMKEIVGWMPLMAAQKDFFWEALDMLQRAEGGGGGVGPPAPET.

The F-box domain occupies Pro36–Ile82. The stretch at Gly376 to Ser425 is one RCC1 repeat.

In terms of assembly, directly interacts with SKP1 and CUL1.

Functionally, substrate-recognition component of the SCF (SKP1-CUL1-F-box protein)-type E3 ubiquitin ligase complex. This chain is F-box only protein 24 (FBXO24), found in Homo sapiens (Human).